The sequence spans 264 residues: Acyl-[acyl-carrier-protein]--UDP-N-acetylglucosamine O-acyltransferase (264 aa).

The protein belongs to the transferase hexapeptide repeat family. LpxA subfamily. As to quaternary structure, homotrimer.

Its subcellular location is the cytoplasm. It catalyses the reaction a (3R)-hydroxyacyl-[ACP] + UDP-N-acetyl-alpha-D-glucosamine = a UDP-3-O-[(3R)-3-hydroxyacyl]-N-acetyl-alpha-D-glucosamine + holo-[ACP]. It functions in the pathway glycolipid biosynthesis; lipid IV(A) biosynthesis; lipid IV(A) from (3R)-3-hydroxytetradecanoyl-[acyl-carrier-protein] and UDP-N-acetyl-alpha-D-glucosamine: step 1/6. Involved in the biosynthesis of lipid A, a phosphorylated glycolipid that anchors the lipopolysaccharide to the outer membrane of the cell. This is Acyl-[acyl-carrier-protein]--UDP-N-acetylglucosamine O-acyltransferase from Rickettsia peacockii (strain Rustic).